Here is a 427-residue protein sequence, read N- to C-terminus: Enolase (427 aa).

Q163 is a (2R)-2-phosphoglycerate binding site. E205 acts as the Proton donor in catalysis. Positions 242, 285, and 312 each coordinate Mg(2+). (2R)-2-phosphoglycerate contacts are provided by K337, R366, S367, and K388. The active-site Proton acceptor is the K337.

This sequence belongs to the enolase family. The cofactor is Mg(2+).

It is found in the cytoplasm. The protein localises to the secreted. The protein resides in the cell surface. The catalysed reaction is (2R)-2-phosphoglycerate = phosphoenolpyruvate + H2O. It participates in carbohydrate degradation; glycolysis; pyruvate from D-glyceraldehyde 3-phosphate: step 4/5. Catalyzes the reversible conversion of 2-phosphoglycerate (2-PG) into phosphoenolpyruvate (PEP). It is essential for the degradation of carbohydrates via glycolysis. The sequence is that of Enolase from Thiobacillus denitrificans (strain ATCC 25259 / T1).